Reading from the N-terminus, the 579-residue chain is Arginine--tRNA ligase (579 aa).

Positions 128–138 (PNLAKEMHVGH) match the 'HIGH' region motif.

This sequence belongs to the class-I aminoacyl-tRNA synthetase family. In terms of assembly, monomer.

It is found in the cytoplasm. The enzyme catalyses tRNA(Arg) + L-arginine + ATP = L-arginyl-tRNA(Arg) + AMP + diphosphate. In Pseudomonas syringae pv. syringae (strain B728a), this protein is Arginine--tRNA ligase.